We begin with the raw amino-acid sequence, 999 residues long: Embryonic polarity protein dorsal (999 aa).

Residues Met-1–Arg-44 form a disordered region. The RHD domain occupies Pro-47–Lys-342. Ser-312 is subject to Phosphoserine; by PKA. 2 disordered regions span residues Phe-389–Thr-424 and Gln-670–Gly-851. The span at Glu-402–Thr-424 shows a compositional bias: low complexity. The Nuclear export signal signature appears at Asn-668 to Pro-677. A compositionally biased stretch (pro residues) spans Pro-677–Pro-686. Residues Lys-710 to Ser-719 show a composition bias toward basic and acidic residues. Positions Ile-720–Ser-734 are enriched in polar residues. The Nuclear localization signal motif lies at Lys-756–Asp-773. Composition is skewed to low complexity over residues Ser-819 to Val-829 and Ser-836 to Gly-851.

As to quaternary structure, interacts with tamo via the nuclear localization signal. Interacts with emb, a component of the nuclear export complex. In unchallenged larvae, expression of both isoforms is seen in fat body and gut (isoform A is more abundant). After immune challenge levels of both isoforms are enhanced.

Its subcellular location is the cytoplasm. The protein resides in the nucleus. Functionally, embryonic developmental transcription factor. The lateral or ventral identity of a cell depends upon the concentration of this protein in its nucleus during the blastoderm stage. Acts as a morphogenetic transcription factor that specifically binds to the kappa-B-related consensus sequence 5'-GRGAAAANCC-3', located in the enhancer region of zygotic genes such as Zen, Twist, Snail and Decapentaplegic, promoting their expression. Part of a signaling pathway involving NF-kappa-B and Toll-related receptors, that functions in the apoptosis of unfit cells during cell competition. Mediates an immune response in larvae. May be part of a NF-kappa-B and Tollo signaling cascade that regulates development of the peripheral nervous system. The protein is Embryonic polarity protein dorsal (dl) of Drosophila melanogaster (Fruit fly).